The primary structure comprises 337 residues: Ornithine carbamoyltransferase (337 aa).

Residues 56–59 (STRT), Gln-83, Arg-107, and 134–137 (HPTQ) contribute to the carbamoyl phosphate site. Residues Asn-168, Asp-232, and 236–237 (SM) each bind L-ornithine. Carbamoyl phosphate-binding positions include 274 to 275 (CL) and Arg-320.

This sequence belongs to the aspartate/ornithine carbamoyltransferase superfamily. OTCase family.

The protein resides in the cytoplasm. It catalyses the reaction carbamoyl phosphate + L-ornithine = L-citrulline + phosphate + H(+). It functions in the pathway amino-acid biosynthesis; L-arginine biosynthesis; L-arginine from L-ornithine and carbamoyl phosphate: step 1/3. In terms of biological role, reversibly catalyzes the transfer of the carbamoyl group from carbamoyl phosphate (CP) to the N(epsilon) atom of ornithine (ORN) to produce L-citrulline. The chain is Ornithine carbamoyltransferase from Shigella flexneri serotype 5b (strain 8401).